The following is a 223-amino-acid chain: MRVLLVALALLALAASATSTHTSGGCGCQPPPPVHLPPPVHLPPPVHLPPPVHLPPPVHLPPPVHLPPPVHVPPPVHLPPPPCHYPTQPPRPQPHPQPHPCPCQQPHPSPCQLQGTCGVGSTPILGQCVEFLRHQCSPTATPYCSPQCQSLRQQCCQQLRQVEPQHRYQAIFGLVLQSILQQQPQSGQVAGLLAAQIAQQLTAMCGLQQPTPCPYAAAGGVPH.

The signal sequence occupies residues methionine 1 to serine 19. Tandem repeats lie at residues proline 31–leucine 36, proline 37–leucine 42, proline 43–leucine 48, proline 49–leucine 54, proline 55–leucine 60, proline 61–leucine 66, proline 67–valine 72, proline 73–leucine 78, glutamine 97–glutamine 104, and glutamine 105–glutamine 112. Residues proline 31–leucine 78 form an 8 X 6 AA tandem repeats of P-P-P-V-H-L region. The interval glutamine 97–glutamine 112 is 2 X 8 AA tandem repeats of Q-P-H-P-C-P-C-Q.

It belongs to the gliadin/glutenin family.

The protein localises to the vacuole. The protein resides in the aleurone grain membrane. Seed storage protein. It accounts for about 15% of the total endosperm protein content. The sequence is that of Glutelin-2 from Zea mays (Maize).